The primary structure comprises 787 residues: Protocadherin beta-15 (787 aa).

The N-terminal stretch at Met-1 to Ala-26 is a signal peptide. Over Gly-27 to Leu-690 the chain is Extracellular. Cadherin domains are found at residues Val-35 to Phe-133, Met-138 to Phe-242, Tyr-247 to Leu-347, Leu-352 to Phe-451, and Tyr-456 to Val-561. Asn-418 carries an N-linked (GlcNAc...) asparagine glycan. A glycan (N-linked (GlcNAc...) asparagine) is linked at Asn-567. In terms of domain architecture, Cadherin 6 spans Gly-568 to Leu-671. The chain crosses the membrane as a helical span at residues Val-691–Val-711. Over Arg-712–Glu-787 the chain is Cytoplasmic.

The protein resides in the cell membrane. In terms of biological role, potential calcium-dependent cell-adhesion protein. May be involved in the establishment and maintenance of specific neuronal connections in the brain. The sequence is that of Protocadherin beta-15 (PCDHB15) from Homo sapiens (Human).